The following is a 418-amino-acid chain: Glutamyl-tRNA reductase (418 aa).

Substrate-binding positions include 49–52 (TCNR), Ser106, 111–113 (EPQ), and Gln117. Cys50 (nucleophile) is an active-site residue. Residue 186-191 (GAGEMI) coordinates NADP(+).

This sequence belongs to the glutamyl-tRNA reductase family. In terms of assembly, homodimer.

The enzyme catalyses (S)-4-amino-5-oxopentanoate + tRNA(Glu) + NADP(+) = L-glutamyl-tRNA(Glu) + NADPH + H(+). The protein operates within porphyrin-containing compound metabolism; protoporphyrin-IX biosynthesis; 5-aminolevulinate from L-glutamyl-tRNA(Glu): step 1/2. Its function is as follows. Catalyzes the NADPH-dependent reduction of glutamyl-tRNA(Glu) to glutamate 1-semialdehyde (GSA). This is Glutamyl-tRNA reductase from Alcanivorax borkumensis (strain ATCC 700651 / DSM 11573 / NCIMB 13689 / SK2).